Here is a 537-residue protein sequence, read N- to C-terminus: uncharacterized protein (537 aa).

The disordered stretch occupies residues 10–56 (HHDVEPQNVEEEPPLTGQTIVTEDKLETSAKDKKHESPSMSEDEEGS). The span at 31-46 (TEDKLETSAKDKKHES) shows a compositional bias: basic and acidic residues. The next 12 membrane-spanning stretches (helical) occupy residues 90-110 (FVAT…TACI), 133-153 (LFIV…DIFG), 156-176 (WVYV…ALAY), 180-200 (MMAI…ANVA), 213-233 (GFGI…GSPI), 243-263 (WFYW…VLCP), 313-333 (PIIM…FLYL), 348-368 (YMGA…VVML), 393-413 (FLIS…FAFT), 422-442 (SPLI…LAMI), 457-477 (IAAF…LGII), and 492-512 (AFIS…GHLI).

Belongs to the major facilitator superfamily. CAR1 family.

The protein resides in the endoplasmic reticulum. It localises to the golgi apparatus. Its subcellular location is the membrane. This is an uncharacterized protein from Schizosaccharomyces pombe (strain 972 / ATCC 24843) (Fission yeast).